Reading from the N-terminus, the 442-residue chain is Elongation factor 1-gamma (442 aa).

In terms of domain architecture, GST N-terminal spans 2–87; it reads AAGTLYTYPE…FLSNDALRGS (86 aa). A GST C-terminal domain is found at 88–216; the sequence is TPQASAQVLQ…VKLCEKMAQF (129 aa). Composition is skewed to basic and acidic residues over residues 224–242 and 249–263; these read MQPK…KEGG and QEKK…KAAP. Residues 224–273 form a disordered region; the sequence is MQPKKEAPAKKEKAGKEGGKQQQPQQEKKEKKKEEKKAAPAEEEMDECEA. An EF-1-gamma C-terminal domain is found at 281 to 442; sequence AKDPYAHLPK…KSFNQGKIFK (162 aa).

EF-1 is composed of four subunits: alpha, beta, delta, and gamma.

Its function is as follows. Probably plays a role in anchoring the complex to other cellular components. The polypeptide is Elongation factor 1-gamma (eef1g) (Carassius auratus (Goldfish)).